A 503-amino-acid chain; its full sequence is N-fatty-acyl-amino acid synthase/hydrolase PM20D1 (503 aa).

A signal peptide spans 1 to 24; that stretch reads MAELLASLPAWAAVLLLFFATVSG. An N-linked (GlcNAc...) asparagine glycan is attached at N72. H125 lines the Zn(2+) pocket. The active site involves D127. D157 serves as a coordination point for Zn(2+). E191 (proton acceptor) is an active-site residue. Residues E192 and D218 each contribute to the Zn(2+) site. N443 carries N-linked (GlcNAc...) asparagine glycosylation. H465 lines the Zn(2+) pocket.

This sequence belongs to the peptidase M20A family. Zn(2+) is required as a cofactor. In addition to being detected in blood (at protein level), PM20D1 is also highly expressed in other tissues including brown adipocytes, liver and kidney. It is also expressed in small intestine, large intestine, heart and pancreas.

Its subcellular location is the secreted. It catalyses the reaction an N-acyl-L-amino acid + H2O = an L-alpha-amino acid + a carboxylate. The catalysed reaction is an N-acyl-aromatic L-alpha-amino acid + H2O = an aromatic L-alpha-amino acid + a carboxylate. The enzyme catalyses N-(5Z,8Z,11Z,14Z)-eicosatetraenoyl-glycine + H2O = (5Z,8Z,11Z,14Z)-eicosatetraenoate + glycine. It carries out the reaction N-hexadecanoyl-L-phenylalanine + H2O = hexadecanoate + L-phenylalanine. It catalyses the reaction N-octadecanoyl-L-phenylalanine + H2O = octadecanoate + L-phenylalanine. The catalysed reaction is N-(4Z,7Z,10Z,13Z,16Z,19Z-docosahexaenoyl)-L-phenylalanine + H2O = (4Z,7Z,10Z,13Z,16Z,19Z)-docosahexaenoate + L-phenylalanine. The enzyme catalyses N-(9Z-octadecenoyl)-L-asparagine + H2O = L-asparagine + (9Z)-octadecenoate. It carries out the reaction (9Z)-octadecenoate + glycine = N-(9Z-octadecenoyl)glycine + H2O. It catalyses the reaction N-(9Z-octadecenoyl)-L-lysine + H2O = L-lysine + (9Z)-octadecenoate. The catalysed reaction is N-(9Z-octadecenoyl)-L-methionine + H2O = (9Z)-octadecenoate + L-methionine. The enzyme catalyses N-(9Z-octadecenoyl)-L-serine + H2O = L-serine + (9Z)-octadecenoate. It carries out the reaction N-(9Z-octadecenoyl)-L-tryptophan + H2O = L-tryptophan + (9Z)-octadecenoate. It catalyses the reaction N-(9Z-octadecenoyl)-L-tyrosine + H2O = L-tyrosine + (9Z)-octadecenoate. The catalysed reaction is N-(9Z-octadecenoyl)-L-glutamine + H2O = L-glutamine + (9Z)-octadecenoate. The enzyme catalyses N-(5Z,8Z,11Z,14Z-eicosatetraenoyl)-L-serine + H2O = (5Z,8Z,11Z,14Z)-eicosatetraenoate + L-serine. It carries out the reaction (5Z,8Z,11Z,14Z)-eicosatetraenoate + L-phenylalanine = N-(5Z,8Z,11Z,14Z-eicosatetraenoyl)-L-phenylalanine + H2O. It catalyses the reaction N-(9Z-octadecenoyl)-L-leucine + H2O = L-leucine + (9Z)-octadecenoate. The catalysed reaction is L-phenylalanine + (9Z)-octadecenoate = N-(9Z-octadecenoyl)-L-phenylalanine + H2O. It functions in the pathway amino-acid metabolism. The protein operates within energy metabolism; electron transfer. It participates in lipid metabolism; fatty acid metabolism. Lipoproteins are powerful coactivators of PM20D1 activity in vitro and NAA biosynthesis in vivo. Functionally, secreted enzyme that regulates the endogenous N-fatty acyl amino acid (NAAs) tissue and circulating levels by functioning as a bidirectional NAA synthase/hydrolase. It condenses free fatty acids and free amino acids to generate NAAs and bidirectionally catalyzes the reverse hydrolysis reaction. Some of these NAAs stimulate oxidative metabolism via mitochondrial uncoupling, increasing energy expenditure in a UPC1-independent manner. Thereby, this secreted protein may indirectly regulate whole body energy expenditure. PM20D1 circulates in tight association with both low- and high-density (LDL and HDL,respectively) lipoprotein particles. This is N-fatty-acyl-amino acid synthase/hydrolase PM20D1 from Mus musculus (Mouse).